Consider the following 177-residue polypeptide: MKLKALILDEKAMNRTLTRISHEIIEKNKGAEDIVLVGIKRRGYPLAKRISENIYKIEKLKLRVESVDISLYRDDLSRLSDQPAIKKSHPIDVEDKKIILVDDVIYTGRTARAAIDAIIHSGRPKLIQLAVLIDRGHRELPIRADYVGKNIPTSRDEIVSVEISEIDKCNSVKIYEV.

A PRPP-binding motif is present at residues 98–110 (IILVDDVIYTGRT).

This sequence belongs to the purine/pyrimidine phosphoribosyltransferase family. PyrR subfamily. In terms of assembly, homodimer and homohexamer; in equilibrium.

The enzyme catalyses UMP + diphosphate = 5-phospho-alpha-D-ribose 1-diphosphate + uracil. Its function is as follows. Regulates transcriptional attenuation of the pyrimidine nucleotide (pyr) operon by binding in a uridine-dependent manner to specific sites on pyr mRNA. This disrupts an antiterminator hairpin in the RNA and favors formation of a downstream transcription terminator, leading to a reduced expression of downstream genes. Functionally, also displays a weak uracil phosphoribosyltransferase activity which is not physiologically significant. The polypeptide is Bifunctional protein PyrR (Clostridium kluyveri (strain ATCC 8527 / DSM 555 / NBRC 12016 / NCIMB 10680 / K1)).